The following is a 457-amino-acid chain: Solute carrier family 38 member 6 (457 aa).

M1 bears the N-acetylmethionine mark. Residues S4 and S7 each carry the phosphoserine modification. The next 5 membrane-spanning stretches (helical) occupy residues 48-68 (FGLS…LGLA), 70-90 (VMAN…ALLA), 112-132 (LGLF…IIIQ), 171-191 (LLII…KIGF), and 192-212 (LGYT…VVVI). Residues C219 and C239 are joined by a disulfide bond. 6 consecutive transmembrane segments (helical) span residues 251–271 (VYAI…LPIY), 289–309 (AIAL…LTFY), 328–348 (VIVM…APLI), 372–392 (SLTT…VPDI), 395–415 (VFGV…PGLF), and 432–452 (ALFL…LIIF).

Belongs to the amino acid/polyamine transporter 2 family. As to expression, expressed exclusively in neurons and not in astrocytes and glia cells. Highly expressed in the synapse. Highly expressed in glutamatergic neurons. Primarily expressed in excitatory neurons, with some minor expression in inhibitory neurons.

The protein resides in the cell membrane. It is found in the synapse. The catalysed reaction is L-glutamine(out) = L-glutamine(in). The enzyme catalyses L-glutamate(out) = L-glutamate(in). Its function is as follows. Amino acid transporter with an apparent selectivity for L-glutamine and L-glutamate. May facilitate glutamine uptake in excitatory neurons. The transport mechanism remains to be elucidated. This is Solute carrier family 38 member 6 from Mus musculus (Mouse).